The following is a 217-amino-acid chain: MOB kinase activator 3A (217 aa).

Zn(2+) contacts are provided by cysteine 83, cysteine 88, histidine 165, and histidine 170.

It belongs to the MOB1/phocein family.

Functionally, may regulate the activity of kinases. The sequence is that of MOB kinase activator 3A (MOB3A) from Bos taurus (Bovine).